A 156-amino-acid chain; its full sequence is ATP synthase subunit b (156 aa).

The chain crosses the membrane as a helical span at residues L11–N31.

It belongs to the ATPase B chain family. In terms of assembly, F-type ATPases have 2 components, F(1) - the catalytic core - and F(0) - the membrane proton channel. F(1) has five subunits: alpha(3), beta(3), gamma(1), delta(1), epsilon(1). F(0) has three main subunits: a(1), b(2) and c(10-14). The alpha and beta chains form an alternating ring which encloses part of the gamma chain. F(1) is attached to F(0) by a central stalk formed by the gamma and epsilon chains, while a peripheral stalk is formed by the delta and b chains.

The protein localises to the cell inner membrane. F(1)F(0) ATP synthase produces ATP from ADP in the presence of a proton or sodium gradient. F-type ATPases consist of two structural domains, F(1) containing the extramembraneous catalytic core and F(0) containing the membrane proton channel, linked together by a central stalk and a peripheral stalk. During catalysis, ATP synthesis in the catalytic domain of F(1) is coupled via a rotary mechanism of the central stalk subunits to proton translocation. In terms of biological role, component of the F(0) channel, it forms part of the peripheral stalk, linking F(1) to F(0). This Haemophilus influenzae (strain PittEE) protein is ATP synthase subunit b.